Consider the following 703-residue polypeptide: MAALAAGVSKQRAVAEGLGSNQNAVKYLGQDFETLRKQCLNSGVLFKDPEFPACPSALGYKDLGPGSPDTQGIVWKRPTELCPNPQFIVGGATRTDIRQGGLGDCWLLAAIASLTLNEKLLYRVLPRDQSFQKDYAGIFHFQFWQYGEWVEVVIDDRLPTKNGQLLFLHSEEGNEFWSALLEKAYAKLNGSYEALVGGSTIEGFEDFTGGISEFYDLKKPPENLYYIIQKALRKGSLLGCSIDVSTAAEAEATTRQKLVKGHAYSVTGVEEVNFHGRPEKLIRLRNPWGEVEWSGAWSDNAPEWNYIDPRRKEELDKKAEDGEFWMSFSDFLKQYSRLEICNLSPDSLSSEEIHKWNLVLFNGRWTRGSTAGGCLNYPGTYWTNPQFKIHLDEVDEDQEEGTSEPCCTVLLGLMQKNRRRQKRIGQGMLSIGYAVYQIPKELESHTDAHLGRDFFLGRQPSTCSSTYMNLREVSSRVRLPPGQYLVVPSTFEPFKDGDFCLRVFSEKKAKALEIGDTVSGHPHEPHPRDMDEEDEHVRSLFEEFVGKDSEISANQLKRVLNEVLSKRTDMKFDGFNINTCREMISLLDSDGTGSLGPMEFKTLWLKIRTYLEIFQEMDHNHVGTIEAHEMRTALKKAGFTLNNQVQQTIAMRYACSKLGVDFNGFVACMIRLETLFKLFRLLDKDQNGIVQLSLAEWLCCVLV.

A Calpain catalytic domain is found at 45-344; sequence LFKDPEFPAC…YSRLEICNLS (300 aa). Residues Cys-105, His-262, and Asn-286 contribute to the active site. The interval 355–512 is domain III; sequence KWNLVLFNGR…VFSEKKAKAL (158 aa). Residues 513 to 531 are linker; sequence EIGDTVSGHPHEPHPRDMD. EF-hand domains are found at residues 532 to 566, 575 to 608, 605 to 640, and 670 to 703; these read EEDE…VLSK, FNIN…LKIR, LKIR…AGFT, and IRLE…CVLV. A domain IV region spans residues 532 to 703; sequence EEDEHVRSLF…LAEWLCCVLV (172 aa). Positions 588, 590, 592, 594, 599, 618, 620, 624, and 629 each coordinate Ca(2+).

Belongs to the peptidase C2 family. Monomer and homooligomer. Interacts with COPS1/GPS1, COPB1, EYA2, NME2, NME4 and TOMM70. The cofactor is Ca(2+). In terms of processing, undergoes autolytic cleavage between Ala-5 and Ala-6 which gives rise to fragments extending from Ala-6 to the C-terminus, Ala-6 to the EF-hand 2 domain and from Ala-6 to the beginning of domain III. Predominantly expressed in the stomach. Localizes strictly to the surface mucus cells in the gastric epithelium and the mucus-secreting goblet cells in the duodenum. Detected in the pituitary after estrogen stimulation.

It localises to the cytoplasm. It is found in the golgi apparatus. The catalysed reaction is Broad endopeptidase specificity.. Its function is as follows. Calcium-regulated non-lysosomal thiol-protease. Involved in membrane trafficking in the gastric surface mucus cells (pit cells) and may involve the membrane trafficking of mucus cells via interactions with coat protein. Proteolytically cleaves the beta-subunit of coatomer complex. This chain is Calpain-8 (Capn8), found in Rattus norvegicus (Rat).